The sequence spans 579 residues: Extracellular serine/threonine protein kinase FAM20C (579 aa).

Residues 1-10 (MKMILVRRFR) are Cytoplasmic-facing. Residues 1–87 (MKMILVRRFR…PNKHTLRILQ (87 aa)) constitute a propeptide that is removed on maturation. The helical; Signal-anchor for type II membrane protein transmembrane segment at 11-31 (VLILVVFLLACALHIAVDLLP) threads the bilayer. Over 32 to 579 (KLDRRATRSS…ATEHRASTER (548 aa)) the chain is Lumenal. Residues 38 to 79 (TRSSGEPGCSCAQPAAEAAGPGWAQARSRPGESAGGDAGWPN) are disordered. A compositionally biased stretch (low complexity) spans 49–63 (AQPAAEAAGPGWAQA). Asparagine 96 is a glycosylation site (N-linked (GlcNAc...) asparagine). The disordered stretch occupies residues 104 to 155 (KLPSAAEPVDHAPRGQEPRSPPPRDPAHRPLLRDPGPRPRVPPPGPSGDGSL). Basic and acidic residues-rich tracts occupy residues 111–120 (PVDHAPRGQE) and 128–140 (DPAH…DPGP). Glutamine 264, lysine 280, and glutamate 301 together coordinate ATP. Mn(2+) is bound at residue glutamate 301. The kinase domain stretch occupies residues 349–560 (FVSPANNICF…AVRDCVEKDG (212 aa)). 2 disulfides stabilise this stretch: cysteine 357/cysteine 373 and cysteine 362/cysteine 366. ATP is bound at residue 384-387 (AAFL). 2 cysteine pairs are disulfide-bonded: cysteine 421–cysteine 495 and cysteine 496–cysteine 555. Aspartate 453 is an active-site residue. Residues glutamate 458 and aspartate 473 each contribute to the ATP site. Residue aspartate 473 coordinates Mn(2+).

It belongs to the FAM20 family. Homodimer; disulfide-linked. Interacts with FAM20A; probably forming a heterotetramer of 2 subunits of FAM20A and 2 subunits of FAM20C. Interacts with COPII components SEC23A and SEC24A; transport of FAM20C from the endoplasmic reticulum to the Golgi is likely to be mediated by COPII vesicles. Requires Mn(2+) as cofactor. N-glycosylation is required for folding. In terms of processing, autophosphorylated. Post-translationally, propeptide cleavage by MBTPS1/S1P promotes FAM20C secretion and maximal kinase activity which is essential for efficient osteoblast differentiation and biomineralization. In terms of tissue distribution, in the mammary gland, expressed at higher levels in lactating mice than in virgin mice (at protein level). Highly expressed in the tooth. No expression in the dental pulp. At the secretory stage of amelogenesis, it is detected in the matrix of the enamel, in the ameloblasts, and within the cells adjoining the stratum intermedium (a tissue layer analogous to the stellate reticulum seen in the developing molar). Strong expression is observed in maturation stage ameloblasts and throughout the non-cornified layers of the gingival epithelium. Expressed at moderate levels in bone and at low levels in kidney, liver, brain and lung. Very low expression, if any, in spleen and skeletal muscle.

The protein resides in the golgi apparatus membrane. Its subcellular location is the secreted. The protein localises to the endoplasmic reticulum. The catalysed reaction is L-seryl-[protein] + ATP = O-phospho-L-seryl-[protein] + ADP + H(+). The enzyme catalyses L-threonyl-[protein] + ATP = O-phospho-L-threonyl-[protein] + ADP + H(+). With respect to regulation, serine/threonine protein kinase activity is increased upon interaction with FAM20A. Functionally, golgi serine/threonine protein kinase that phosphorylates secretory pathway proteins within Ser-x-Glu/pSer motifs and plays a key role in biomineralization of bones and teeth. Constitutes the main protein kinase for extracellular proteins, generating the majority of the extracellular phosphoproteome. Mainly phosphorylates proteins within the Ser-x-Glu/pSer motif, but also displays a broader substrate specificity. Phosphorylates ERO1A, enhancing its activity which is required to maintain endoplasmic reticulum redox homeostasis and for oxidative protein folding. During endoplasmic reticulum stress, phosphorylates P4HB/PDIA1 which induces a functional switch, causing P4HB to change from an oxidoreductase to a molecular chaperone. This is critical to maintain ER proteostasis and reduce cell death under ER stress. Phosphorylation of P4HB also promotes its interaction with ERN1, leading to reduced activity of ERN1, a key sensor for the endoplasmic reticulum unfolded protein response. Required for osteoblast differentiation and mineralization. Phosphorylates casein as well as a number of proteins involved in biomineralization such as AMELX, AMTN, ENAM and SPP1. In addition to its role in biomineralization, also plays a role in lipid homeostasis, wound healing and cell migration and adhesion. This is Extracellular serine/threonine protein kinase FAM20C from Mus musculus (Mouse).